A 415-amino-acid polypeptide reads, in one-letter code: Stimulator of interferon genes protein (415 aa).

In terms of domain architecture, TIR spans 29–163 (HVYHAFISYC…DIIQAISKPE (135 aa)). The active site involves Glu-104. Position 256 (Arg-256) interacts with 2',3'-cGAMP. A disordered region spans residues 387–415 (KSPSSTNMVKSEPNIYREESGKTKSVERG). Residues 401 to 415 (IYREESGKTKSVERG) are compositionally biased toward basic and acidic residues.

In the N-terminal section; belongs to the Toll-like receptor family. It in the C-terminal section; belongs to the TMEM173 family. Homodimer.

The enzyme catalyses NAD(+) + H2O = ADP-D-ribose + nicotinamide + H(+). In terms of biological role, sensor of cytosolic DNA from bacteria and viruses that promotes autophagy. Binds c-di-AMP, 2'3'-cGAMP, 3'3'-cGAMP and to a lesser extent c-di-GMP. Nucleotide binding has not been seen to stimulate NAD(+) hydrolase activity. The chain is Stimulator of interferon genes protein from Magallana gigas (Pacific oyster).